A 208-amino-acid chain; its full sequence is Small ribosomal subunit protein uS4 (208 aa).

The 61-residue stretch at 98–158 folds into the S4 RNA-binding domain; the sequence is CRLDTVSYRM…EKAKNHLRIK (61 aa).

The protein belongs to the universal ribosomal protein uS4 family. As to quaternary structure, part of the 30S ribosomal subunit. Contacts protein S5. The interaction surface between S4 and S5 is involved in control of translational fidelity.

One of the primary rRNA binding proteins, it binds directly to 16S rRNA where it nucleates assembly of the body of the 30S subunit. In terms of biological role, with S5 and S12 plays an important role in translational accuracy. This chain is Small ribosomal subunit protein uS4, found in Nitrosospira multiformis (strain ATCC 25196 / NCIMB 11849 / C 71).